Here is a 72-residue protein sequence, read N- to C-terminus: UPF0352 protein CGSHiGG_07710 (72 aa).

This sequence belongs to the UPF0352 family.

The sequence is that of UPF0352 protein CGSHiGG_07710 from Haemophilus influenzae (strain PittGG).